Reading from the N-terminus, the 369-residue chain is MSILKVIHDRNAGMMPEVYKELTEEEMAGRILKIKKKFGARLFIPGHHYQKDEVIQFADATGDSLQLAQVAQKNKKAEYIVFCGVHFMAETADMLTSDEQIVVLPDMRAGCSMADMANMRQTNRAWEELTKLFGDTVIPLTYVNSTAEIKAFVGRNGGASVTSSNAARMLTWALSQKERILFLPDQHLGRNTAFDLGIPLSRMAVWDPIAEKLEYNGDMKDIIIILWKGHCSVHEKFTVANIKSVKERDPDINVIVHPECTHEVVALSDFSGSTKKIIDSINEAKPGSKWAIGTEMNLVSRIIQEHPDKQIESLNPDMCPCLTMNRIDMPHLLWSLEQIDKGEPTGVIKVDQDIAKDAILALNRMLTIR.

Residues H47 and S64 each contribute to the iminosuccinate site. C111 contributes to the [4Fe-4S] cluster binding site. Residues 142-144 and S163 contribute to the iminosuccinate site; that span reads YVN. Residue C231 coordinates [4Fe-4S] cluster. Residues 257–259 and T274 contribute to the iminosuccinate site; that span reads HPE. C321 lines the [4Fe-4S] cluster pocket.

This sequence belongs to the quinolinate synthase family. Type 3 subfamily. Requires [4Fe-4S] cluster as cofactor.

It is found in the cytoplasm. The catalysed reaction is iminosuccinate + dihydroxyacetone phosphate = quinolinate + phosphate + 2 H2O + H(+). Its pathway is cofactor biosynthesis; NAD(+) biosynthesis; quinolinate from iminoaspartate: step 1/1. In terms of biological role, catalyzes the condensation of iminoaspartate with dihydroxyacetone phosphate to form quinolinate. In Bacillus licheniformis (strain ATCC 14580 / DSM 13 / JCM 2505 / CCUG 7422 / NBRC 12200 / NCIMB 9375 / NCTC 10341 / NRRL NRS-1264 / Gibson 46), this protein is Quinolinate synthase.